The following is a 251-amino-acid chain: uncharacterized protein (251 aa).

It belongs to the chlamydial CPn_0206/CT_203/TC_0475 family.

This is an uncharacterized protein from Chlamydia trachomatis serovar D (strain ATCC VR-885 / DSM 19411 / UW-3/Cx).